A 100-amino-acid chain; its full sequence is MTEKTITRMDLSEAVFREVGLSRNESAQLVESMLQHMSDALVRGEQVKISSFGTFSVRDKSARVGRNPKTGEEVPIQPRRVLTFRPSHLMKDRVADGNKS.

The protein belongs to the bacterial histone-like protein family. Heterodimer of an alpha and a beta chain.

Its function is as follows. This protein is one of the two subunits of integration host factor, a specific DNA-binding protein that functions in genetic recombination as well as in transcriptional and translational control. This is Integration host factor subunit alpha from Ruegeria sp. (strain TM1040) (Silicibacter sp.).